A 323-amino-acid polypeptide reads, in one-letter code: Breast cancer metastasis-suppressor 1-like protein-A (323 aa).

Basic and acidic residues predominate over residues 1-15 (MPVHSREKKESNHEE). The tract at residues 1–52 (MPVHSREKKESNHEEMEVDFAEQEGSSSEDEDTESSSVSEDGESSEMDDEDC) is disordered. Residues 16–51 (MEVDFAEQEGSSSEDEDTESSSVSEDGESSEMDDED) show a composition bias toward acidic residues. 2 coiled-coil regions span residues 50-81 (EDCE…YKER) and 156-178 (QTEL…ITSE).

It belongs to the BRMS1 family.

It is found in the nucleus. Involved in the histone deacetylase (HDAC1)-dependent transcriptional repression activity. This Danio rerio (Zebrafish) protein is Breast cancer metastasis-suppressor 1-like protein-A (brms1la).